A 287-amino-acid polypeptide reads, in one-letter code: MAKLRHSRFQARKWSTLMLVLFMLFMLTIVLLMLLAFGVFSLPINNDESSPIDLSYFRRAATERSEGLGKRGDQWTEVLSWEPRAFVYHNFLSKEECEYLISLAKPHMVKSTVVDSETGKSKDSRVRTSSGTFLRRGRDKIIKTIEKRIADYTFIPADHGEGLQVLHYEAGQKYEPHYDYFVDEFNTKNGGQRMATMLMYLSDVEEGGETVFPAANMNFSSVPWYNELSECGKKGLSVKPRMGDALLFWSMRPDATLDPTSLHGGCPVIRGNKWSSTKWMHVGEYKI.

At 1 to 16 (MAKLRHSRFQARKWST) the chain is on the cytoplasmic side. The helical; Signal-anchor for type II membrane protein transmembrane segment at 17–37 (LMLVLFMLFMLTIVLLMLLAF) threads the bilayer. At 38 to 287 (GVFSLPINND…KWMHVGEYKI (250 aa)) the chain is on the lumenal side. Positions 159–282 (HGEGLQVLHY…KWSSTKWMHV (124 aa)) constitute a Fe2OG dioxygenase domain. Residues His177 and Asp179 each contribute to the Fe cation site. A glycan (N-linked (GlcNAc...) asparagine) is linked at Asn218. Fe cation is bound at residue His263. Lys273 contacts 2-oxoglutarate.

This sequence belongs to the P4HA family. It depends on Fe(2+) as a cofactor. L-ascorbate is required as a cofactor.

It is found in the endoplasmic reticulum membrane. The enzyme catalyses L-prolyl-[collagen] + 2-oxoglutarate + O2 = trans-4-hydroxy-L-prolyl-[collagen] + succinate + CO2. Catalyzes the post-translational formation of 4-hydroxyproline in -Xaa-Pro-Gly- sequences in proline-rich peptide sequences of plant glycoproteins and other proteins. Hydroxyprolines are important constituent of many plant cell wall glycoproteins such as extensins, hydroxyproline-rich glycoproteins, lectins and arabinogalactan proteins. In Arabidopsis thaliana (Mouse-ear cress), this protein is Probable prolyl 4-hydroxylase 3.